A 792-amino-acid polypeptide reads, in one-letter code: Carboxysome assembly protein CsoS2 (792 aa).

Positions 1–15 are enriched in basic and acidic residues; it reads MAKQSSRELALERRK. The segment at 1-235 is N-terminal domain; the sequence is MAKQSSRELA…EISQRVRELR (235 aa). Disordered regions lie at residues 1 to 259, 280 to 299, and 338 to 359; these read MAKQ…RNGS, QVVT…NEAS, and HGNR…DEPG. Residues 7 to 22 form an N-repeat 1 repeat; it reads RELALERRKALSNSGK. Composition is skewed to polar residues over residues 17–36 and 69–82; these read LSNS…NRIR and DTSF…SGAS. The N-repeat 2 repeat unit spans residues 94–109; sequence RELVLARRDELSRRGQ. Composition is skewed to basic and acidic residues over residues 97–106 and 113–126; these read VLARRDELSR and KSKD…EKIS. Over residues 161–175 the composition is skewed to polar residues; sequence DTVSRLSSRNSTSRP. N-repeat repeat units lie at residues 187–202 and 225–240; these read RALV…KHGK and REIS…KSGA. Positions 218–236 are enriched in basic and acidic residues; that stretch reads GDPDLSSREISQRVRELRS. The middle region stretch occupies residues 240–615; that stretch reads ATGKKRSGAC…VQACGSDAPA (376 aa). M-repeat repeat units lie at residues 270-319, 330-379, 388-427, 441-490, 500-549, and 560-609; these read KVGL…DTFC, KVAV…NQYC, KVGQ…GDQY, KVGS…NTFC, KVGL…SGWC, and RTPK…VQAC. Disordered regions lie at residues 608 to 662 and 687 to 792; these read ACGS…GSQI and HFKS…GARG. Residues 616–792 form a C-terminal domain region; that stretch reads GSNDHQGSSE…LITVSGGARG (177 aa). 2 stretches are compositionally biased toward polar residues: residues 618–636 and 651–662; these read NDHQ…SVQS and VTGTSYEQGSQI. C-repeat repeat units follow at residues 633-678 and 703-738; these read SVQS…GTEQ and TRPE…EGAS. Residues 763-792 are C-terminal peptide (CTP); the sequence is EVSQPMSRVTGSSGNTDQGSLITVSGGARG. The segment covering 764–785 has biased composition (polar residues); that stretch reads VSQPMSRVTGSSGNTDQGSLIT.

Belongs to the CsoS2 family. In terms of assembly, probably interacts with the carboxysome major shell protein CsoS1 via the N-terminal domain; this complex probably also interacts with RuBisCO. In terms of processing, has been suggested to undergo ribosomal frameshifting, as does its ortholog in H.neapolitanus. The exact position of the putative frameshift is not given, but it would probably occur in the sixth M-repeat and remove the C-terminus.

The protein resides in the carboxysome. Required for alpha-carboxysome (Cb) assembly, mediates interaction between RuBisCO and the Cb shell. The protein is probably intrinsically disordered. The C-terminal repeats act as the encapsulation signal to target proteins to the Cb; they are necessary and sufficient to target both CsoS2 and foreign proteins to the Cb. The N-terminal repeats of this protein bind simultaneously to both subunits of RuBisCO. Probably also interacts with the major shell proteins (CsoS1); that interaction would increase the local concentration of CsoS2 so that it can condense RuBisCO and full carboxysomes can be formed. This chain is Carboxysome assembly protein CsoS2, found in Prochlorococcus marinus (strain MIT 9313).